Reading from the N-terminus, the 122-residue chain is Probable non-specific lipid-transfer protein 3 (122 aa).

An N-terminal signal peptide occupies residues 1–29 (MARLNSKAVAAAVVLAAVVLMMAGREASA). Disulfide bonds link Cys33/Cys81, Cys43/Cys58, Cys59/Cys104, and Cys79/Cys118.

Belongs to the plant LTP family. Expressed in phloem. Also detected in the epidermis near the vascular tissues in resistant plants infected by Hessian fly larvae.

Functionally, plant non-specific lipid-transfer proteins transfer phospholipids as well as galactolipids across membranes. May play a role in wax or cutin deposition in the cell walls of expanding epidermal cells and certain secretory tissues. The sequence is that of Probable non-specific lipid-transfer protein 3 (LTP3) from Triticum aestivum (Wheat).